The primary structure comprises 189 residues: dCTP deaminase (189 aa).

Residues K112–R117, T136–E138, Q157, Y171, and Q181 each bind dCTP. Catalysis depends on E138, which acts as the Proton donor/acceptor.

It belongs to the dCTP deaminase family. Homotrimer.

It carries out the reaction dCTP + H2O + H(+) = dUTP + NH4(+). The protein operates within pyrimidine metabolism; dUMP biosynthesis; dUMP from dCTP (dUTP route): step 1/2. In terms of biological role, catalyzes the deamination of dCTP to dUTP. The chain is dCTP deaminase from Alcanivorax borkumensis (strain ATCC 700651 / DSM 11573 / NCIMB 13689 / SK2).